Reading from the N-terminus, the 149-residue chain is Stathmin (149 aa).

The residue at position 2 (Ala-2) is an N-acetylalanine. Position 4 is a phosphoserine (Ser-4). One can recognise an SLD domain in the interval 4-145; it reads SDIQVKELEK…NKESKDPADE (142 aa). Lys-9 is modified (N6-acetyllysine). Phosphoserine is present on Ser-16. Ser-25 is subject to Phosphoserine; by CDK1, MAPK1 and MAPK3. At Lys-29 the chain carries N6-methyllysine. Ser-31 carries the post-translational modification Phosphoserine. Position 38 is a phosphoserine; by CDK1, MAPK1 and MAPK3 (Ser-38). A coiled-coil region spans residues 41–140; that stretch reads KKKDLSLEEI…EEVRKNKESK (100 aa). Ser-63 bears the Phosphoserine; by PKA mark. N6-acetyllysine is present on residues Lys-100 and Lys-119. Positions 121-143 are enriched in basic and acidic residues; the sequence is ERLREKDKHIEEVRKNKESKDPA. Residues 121-149 are disordered; that stretch reads ERLREKDKHIEEVRKNKESKDPADETEAD.

It belongs to the stathmin family. Binds to two alpha/beta-tubulin heterodimers. Interacts with KIST. In terms of processing, many different phosphorylated forms are observed depending on specific combinations among the sites which can be phosphorylated. MAPK is responsible for the phosphorylation of stathmin in response to NGF. Phosphorylation at Ser-16 seems to be required for neuron polarization.

Its subcellular location is the cytoplasm. It is found in the cytoskeleton. Its function is as follows. Involved in the regulation of the microtubule (MT) filament system by destabilizing microtubules. Prevents assembly and promotes disassembly of microtubules. Its phosphorylation at Ser-16 may be required for axon formation during neurogenesis. Involved in the control of the learned and innate fear. This chain is Stathmin (STMN1), found in Bos taurus (Bovine).